Consider the following 462-residue polypeptide: tRNA pseudouridine(32) synthase, mitochondrial (462 aa).

The transit peptide at 1–24 directs the protein to the mitochondrion; sequence MQRNNRLRNLFTVPVIMARQLKRN. The S4 RNA-binding domain occupies 127–188; the sequence is KLVDVFISEF…HEPPVTSRPI (62 aa). Residue aspartate 238 is part of the active site.

This sequence belongs to the pseudouridine synthase RluA family.

The protein localises to the mitochondrion. It carries out the reaction uridine(32) in tRNA = pseudouridine(32) in tRNA. Functionally, responsible for synthesis of pseudouridine from uracil-32 in mitochondrial transfer RNAs. The sequence is that of tRNA pseudouridine(32) synthase, mitochondrial (PUS9) from Saccharomyces cerevisiae (strain ATCC 204508 / S288c) (Baker's yeast).